Here is a 92-residue protein sequence, read N- to C-terminus: Small ribosomal subunit protein uS19c (92 aa).

This sequence belongs to the universal ribosomal protein uS19 family.

Its subcellular location is the plastid. The protein resides in the chloroplast. Its function is as follows. Protein S19 forms a complex with S13 that binds strongly to the 16S ribosomal RNA. This is Small ribosomal subunit protein uS19c from Oltmannsiellopsis viridis (Marine flagellate).